A 235-amino-acid chain; its full sequence is Uridylate kinase (235 aa).

9–12 (KLSG) provides a ligand contact to ATP. The involved in allosteric activation by GTP stretch occupies residues 17 to 22 (GKDGYG). Gly-51 serves as a coordination point for UMP. 2 residues coordinate ATP: Gly-52 and Arg-56. Residues Asp-71 and 132–139 (TGNPYFTT) contribute to the UMP site. 3 residues coordinate ATP: Thr-159, Tyr-165, and Asp-168.

The protein belongs to the UMP kinase family. Homohexamer.

The protein localises to the cytoplasm. It catalyses the reaction UMP + ATP = UDP + ADP. Its pathway is pyrimidine metabolism; CTP biosynthesis via de novo pathway; UDP from UMP (UMPK route): step 1/1. Allosterically activated by GTP. Inhibited by UTP. Its function is as follows. Catalyzes the reversible phosphorylation of UMP to UDP. The protein is Uridylate kinase of Chlorobium luteolum (strain DSM 273 / BCRC 81028 / 2530) (Pelodictyon luteolum).